The primary structure comprises 181 residues: Large ribosomal subunit protein uL5 (181 aa).

This sequence belongs to the universal ribosomal protein uL5 family. As to quaternary structure, part of the 50S ribosomal subunit; contacts the 5S rRNA and probably tRNA. Forms a bridge to the 30S subunit in the 70S ribosome.

Functionally, this is one of the proteins that bind and probably mediate the attachment of the 5S RNA into the large ribosomal subunit, where it forms part of the central protuberance. In the 70S ribosome it contacts protein S13 of the 30S subunit (bridge B1b), connecting the 2 subunits; this bridge is implicated in subunit movement. May contact the P site tRNA; the 5S rRNA and some of its associated proteins might help stabilize positioning of ribosome-bound tRNAs. In Methanococcus aeolicus (strain ATCC BAA-1280 / DSM 17508 / OCM 812 / Nankai-3), this protein is Large ribosomal subunit protein uL5.